The chain runs to 316 residues: MSEKVNSDFEDFSSDEETDQHNVLIQTKKKISSKDDIFSKKVEDIESENESDIEEEQKQEEKEDVEQPDKENGEKLDREVEEQASSTTSLDLKTEKLRQLVKSKAAKKSKHKTGVVYFSSIPPYMKPAKMRQILTRFGEVDRLFLKKEDDQKYKQRVKGGGNKKNKYEEGWAEFIRKRDAKLCAETLNGNIIGGKKGTFYHDDILNVKYLPGFKWADLTEQIARENDIRQAKLEMEISQANKLNAEFIRNVEQSKMIQNIKNSRKRAGKEGESADSHPHREFKQRRVETSRANAPSDIKQQSSGSKDLGNVLTNLL.

The interval M1 to D91 is disordered. A phosphoserine mark is found at S7, S13, and S14. Over residues D8 to T18 the composition is skewed to acidic residues. The segment covering S32–D44 has biased composition (basic and acidic residues). Residues I45 to K58 are compositionally biased toward acidic residues. The segment covering Q59–R78 has biased composition (basic and acidic residues). Residues G114 to I204 enclose the RRM domain. The tract at residues K261 to L316 is disordered. The span at G268–T289 shows a compositional bias: basic and acidic residues. The span at S290 to L316 shows a compositional bias: polar residues.

It belongs to the ESF2/ABP1 family. In terms of assembly, component of the 90S pre-ribosomes. Interacts directly with DBP8.

It localises to the nucleus. The protein localises to the nucleolus. Involved in the small subunit (SSU) processome assembly and function, and in the 18S rRNA synthesis. Required for the early cleavages at sites A0, A1 and A2. Stimulates DBP8 RNA helicase ATPase activity. This chain is Pre-rRNA-processing protein ESF2 (ESF2), found in Saccharomyces cerevisiae (strain ATCC 204508 / S288c) (Baker's yeast).